The primary structure comprises 391 residues: Alkanesulfonate monooxygenase (391 aa).

The protein belongs to the SsuD family.

The enzyme catalyses an alkanesulfonate + FMNH2 + O2 = an aldehyde + FMN + sulfite + H2O + 2 H(+). Its function is as follows. Catalyzes the desulfonation of aliphatic sulfonates. The polypeptide is Alkanesulfonate monooxygenase (Paracidovorax citrulli (strain AAC00-1) (Acidovorax citrulli)).